Here is a 377-residue protein sequence, read N- to C-terminus: Ferric enterobactin transport protein FepE (377 aa).

Over 1–41 the chain is Cytoplasmic; it reads MSSLNIKQGSDAHFPDYPLASPSNNEIDLLNLISVLWRAKK. Residues 42–62 form a helical membrane-spanning segment; the sequence is TVMAVVFAFACAGLLISFILP. The Periplasmic portion of the chain corresponds to 63–338; it reads QKWTSAAVVT…LPVKKDGPGK (276 aa). Residues 339 to 359 traverse the membrane as a helical segment; it reads AIIVILSALIGGMVACGGVLL. Over 360-377 the chain is Cytoplasmic; the sequence is RYAMASRKQDAMMADHLV.

It belongs to the WzzB/Cld/Rol family.

The protein localises to the cell inner membrane. Part of the ferric enterobactin transport system. The protein is Ferric enterobactin transport protein FepE (fepE) of Escherichia coli (strain K12).